Reading from the N-terminus, the 395-residue chain is Multiple organellar RNA editing factor 8, chloroplastic/mitochondrial (395 aa).

A chloroplast and mitochondrion-targeting transit peptide spans 1-56 (MATHTISRSILCRPAKSLSFLFTRSFASSAPLAKSPASSLLSRSRPLVAAFSSVFR). Over residues 211 to 236 (ANERNRRNDRPRNNDRSRNFERRREN) the composition is skewed to basic and acidic residues. Residues 211-395 (ANERNRRNDR…RDGSGNPYQG (185 aa)) are disordered. Residues 240-300 (GPPPQRPPMG…GPRHPPPYGA (61 aa)) are compositionally biased toward pro residues. Residues 313 to 334 (QNYGGTPPPNYGGAPPANNMGG) show a composition bias toward low complexity. Over residues 335–355 (APPPNYGGGPPPQYGAVPPPQ) the composition is skewed to pro residues. The span at 356–385 (YGGAPPQNNNYQQQGSGMQQPQYQNNYPPN) shows a compositional bias: low complexity.

This sequence belongs to the MORF family. Interacts with protoporphyrinogen oxidase 1 PPOX1. Interacts with PCMP-H52/MEF10. Homodimer and heterodimers with MORF1/RIP8, MORF2/RIP2, MORF3/RIP3, MORF4/RIP4, MORF5/RIP5, MORF6/RIP6 and MORF7/RIP7. Interacts with RBG3/ORRM3. Interacts with PCMP-A2/PMD1. Interacts with ORRM1 and VAT3/OZ1. Interacts with PCMP-H13/MEF35. Interacts with RBG5/ORRM4. Interacts with ORRM6.

It is found in the mitochondrion. It localises to the plastid. Its subcellular location is the chloroplast. Its function is as follows. Involved in organellar RNA editing. Required for the processing of numerous RNA editing sites in mitochondria and plastids. Binds to the plastid RARE1 factor, a pentatricopeptide repeat-containing protein involved in RNA editing. The sequence is that of Multiple organellar RNA editing factor 8, chloroplastic/mitochondrial from Arabidopsis thaliana (Mouse-ear cress).